Reading from the N-terminus, the 287-residue chain is MATPSQHDLRNDFRALLASSECYFTASVFDPMSARIAADLGFEVGILGGSVASLQVLAAPDFALITLSEFVEQATRIGRVTRLPVIADADHGYGNALNVMRTITELERAGVAALTIEDTLLPAQYGHKSTDLIPLDEGVGKMRAALEARIDPAMAIIARTNAGQLDDEAAVERVCAYQAAGVDAICLVGVRDFDHLERLAAPLDIPLMLVTYGNPELRDRARLAALGVRVVVNGHAAYFAAIKATYDCLREQRDIAASELNASQLATRYSTLDEYREWARDYMDVKE.

Residue serine 50 participates in substrate binding. Mg(2+) is bound at residue aspartate 88. Substrate contacts are provided by arginine 159 and histidine 235.

Belongs to the isocitrate lyase/PEP mutase superfamily. Oxaloacetate decarboxylase family. Homotetramer; dimer of dimers. It depends on Mg(2+) as a cofactor.

The catalysed reaction is oxaloacetate + H(+) = pyruvate + CO2. Functionally, catalyzes the decarboxylation of oxaloacetate into pyruvate. Seems to play a role in maintaining cellular concentrations of bicarbonate and pyruvate. This Chromohalobacter salexigens (strain ATCC BAA-138 / DSM 3043 / CIP 106854 / NCIMB 13768 / 1H11) protein is Oxaloacetate decarboxylase.